Here is a 350-residue protein sequence, read N- to C-terminus: MKLVDEAEILVTAGNGGNGCVGFRREKFIPLGGPDGGDGGNGGSVWIVADENVNTLVDFRHERAFKAQRGENGMGRQAYGKGGEDRVIVVPVGTVVMNVQTDEIIGDMTQHGDRLLVAKGGKGGLGNMHFKSSVNRAPRQSTTGEEGEERLLKLELKLLADVGLLGFPNAGKSTLIRAVSAATPKVADYPFTTLYPNLGVVSVEAYRSFVIADVPGLIEGAADGAGLGTQFLRHLQRTRLLLHLVDISPMDGGVDGVSPVDQVRTIERELERHDPALLEKPRWLVLNKADLMFPEEAQAAAEAIVAELGWTAPWYLVSALGRDGTFPIMKDVMAFFDRQREDELEARNAG.

An Obg domain is found at 1 to 159; the sequence is MKLVDEAEIL…RLLKLELKLL (159 aa). The OBG-type G domain occupies 160 to 337; that stretch reads ADVGLLGFPN…IMKDVMAFFD (178 aa). GTP is bound by residues 166–173, 191–195, 213–216, 287–290, and 318–320; these read GFPNAGKS, FTTLY, DVPG, NKAD, and SAL. Mg(2+) is bound by residues S173 and T193.

It belongs to the TRAFAC class OBG-HflX-like GTPase superfamily. OBG GTPase family. In terms of assembly, monomer. The cofactor is Mg(2+).

Its subcellular location is the cytoplasm. An essential GTPase which binds GTP, GDP and possibly (p)ppGpp with moderate affinity, with high nucleotide exchange rates and a fairly low GTP hydrolysis rate. Plays a role in control of the cell cycle, stress response, ribosome biogenesis and in those bacteria that undergo differentiation, in morphogenesis control. This is GTPase Obg from Xanthomonas campestris pv. campestris (strain 8004).